Consider the following 157-residue polypeptide: Transcription elongation factor GreA (157 aa).

Residues 17–37 adopt a coiled-coil conformation; the sequence is ELERLLKLRPQISEAIAEARE.

It belongs to the GreA/GreB family.

Functionally, necessary for efficient RNA polymerase transcription elongation past template-encoded arresting sites. The arresting sites in DNA have the property of trapping a certain fraction of elongating RNA polymerases that pass through, resulting in locked ternary complexes. Cleavage of the nascent transcript by cleavage factors such as GreA or GreB allows the resumption of elongation from the new 3'terminus. GreA releases sequences of 2 to 3 nucleotides. In Vibrio parahaemolyticus serotype O3:K6 (strain RIMD 2210633), this protein is Transcription elongation factor GreA.